We begin with the raw amino-acid sequence, 225 residues long: MSLHYYLFIFWILAFVQFSHATYQYEVRMCVVGKSTPQNTYGYGSKRVGRYGIYGDCGCFQKPVGCPRLWYPQYNKACAPMDHWINIPQKQTQLEEVTNWRTATVEEVQRTPLETWNVERTPVETWNLQKNQQGPHSVVKSKVYKKSVYNAKRKVKSLYTKTKKTYAKPVKKYKTIEVITYRKVKVEHIQCCPPLKFWFFDFPDFVEVSDANGNGAKSTNEQFSK.

A signal peptide spans 1 to 21 (MSLHYYLFIFWILAFVQFSHA).

In terms of tissue distribution, prismatic layer of shell (at protein level).

The protein resides in the secreted. This is an uncharacterized protein from Margaritifera margaritifera (Freshwater pearl mussel).